Consider the following 343-residue polypeptide: Tetraacyldisaccharide 4'-kinase (343 aa).

55 to 62 lines the ATP pocket; that stretch reads TVGGEGKT.

Belongs to the LpxK family.

The enzyme catalyses a lipid A disaccharide + ATP = a lipid IVA + ADP + H(+). It functions in the pathway glycolipid biosynthesis; lipid IV(A) biosynthesis; lipid IV(A) from (3R)-3-hydroxytetradecanoyl-[acyl-carrier-protein] and UDP-N-acetyl-alpha-D-glucosamine: step 6/6. In terms of biological role, transfers the gamma-phosphate of ATP to the 4'-position of a tetraacyldisaccharide 1-phosphate intermediate (termed DS-1-P) to form tetraacyldisaccharide 1,4'-bis-phosphate (lipid IVA). The protein is Tetraacyldisaccharide 4'-kinase of Chelativorans sp. (strain BNC1).